A 364-amino-acid chain; its full sequence is Aminomethyltransferase (364 aa).

It belongs to the GcvT family. As to quaternary structure, the glycine cleavage system is composed of four proteins: P, T, L and H.

It carries out the reaction N(6)-[(R)-S(8)-aminomethyldihydrolipoyl]-L-lysyl-[protein] + (6S)-5,6,7,8-tetrahydrofolate = N(6)-[(R)-dihydrolipoyl]-L-lysyl-[protein] + (6R)-5,10-methylene-5,6,7,8-tetrahydrofolate + NH4(+). Its function is as follows. The glycine cleavage system catalyzes the degradation of glycine. The protein is Aminomethyltransferase of Shewanella baltica (strain OS195).